The sequence spans 489 residues: Homoserine O-acetyltransferase (489 aa).

The AB hydrolase-1 domain maps to asparagine 47–glutamate 354. The active-site Nucleophile is serine 152. Arginine 221 serves as a coordination point for substrate. Residues aspartate 315 and histidine 348 contribute to the active site. Aspartate 349 lines the substrate pocket. CBS domains lie at methionine 375 to glutamate 434 and methionine 436 to phenylalanine 489.

The protein belongs to the AB hydrolase superfamily. MetX family. In terms of assembly, homodimer.

Its subcellular location is the cytoplasm. The catalysed reaction is L-homoserine + acetyl-CoA = O-acetyl-L-homoserine + CoA. Its pathway is amino-acid biosynthesis; L-methionine biosynthesis via de novo pathway; O-acetyl-L-homoserine from L-homoserine: step 1/1. Transfers an acetyl group from acetyl-CoA to L-homoserine, forming acetyl-L-homoserine. The sequence is that of Homoserine O-acetyltransferase from Methanohalobium evestigatum (strain ATCC BAA-1072 / DSM 3721 / NBRC 107634 / OCM 161 / Z-7303).